Reading from the N-terminus, the 196-residue chain is GTP cyclohydrolase-2 (196 aa).

49–53 (RVHSE) lines the GTP pocket. Residues cysteine 54, cysteine 65, and cysteine 67 each contribute to the Zn(2+) site. GTP contacts are provided by residues glutamine 70, 92 to 94 (EGR), and threonine 114. Aspartate 126 serves as the catalytic Proton acceptor. The active-site Nucleophile is arginine 128. Residues threonine 149 and lysine 154 each contribute to the GTP site.

It belongs to the GTP cyclohydrolase II family. Homodimer. The cofactor is Zn(2+).

The catalysed reaction is GTP + 4 H2O = 2,5-diamino-6-hydroxy-4-(5-phosphoribosylamino)-pyrimidine + formate + 2 phosphate + 3 H(+). It functions in the pathway cofactor biosynthesis; riboflavin biosynthesis; 5-amino-6-(D-ribitylamino)uracil from GTP: step 1/4. Catalyzes the conversion of GTP to 2,5-diamino-6-ribosylamino-4(3H)-pyrimidinone 5'-phosphate (DARP), formate and pyrophosphate. This chain is GTP cyclohydrolase-2, found in Citrobacter koseri (strain ATCC BAA-895 / CDC 4225-83 / SGSC4696).